The sequence spans 477 residues: Bifunctional protein HldE (477 aa).

The interval 1–318 (MKVTLPEFER…ENAVRGRADT (318 aa)) is ribokinase. Lysine 179 is modified (N6-acetyllysine). Position 195 to 198 (195 to 198 (NLSE)) interacts with ATP. Aspartate 264 is an active-site residue. Residues 344–477 (MTNGVFDILH…IKKIQQDKKG (134 aa)) form a cytidylyltransferase region.

The protein in the N-terminal section; belongs to the carbohydrate kinase PfkB family. This sequence in the C-terminal section; belongs to the cytidylyltransferase family. Homodimer.

It carries out the reaction D-glycero-beta-D-manno-heptose 7-phosphate + ATP = D-glycero-beta-D-manno-heptose 1,7-bisphosphate + ADP + H(+). The catalysed reaction is D-glycero-beta-D-manno-heptose 1-phosphate + ATP + H(+) = ADP-D-glycero-beta-D-manno-heptose + diphosphate. Its pathway is nucleotide-sugar biosynthesis; ADP-L-glycero-beta-D-manno-heptose biosynthesis; ADP-L-glycero-beta-D-manno-heptose from D-glycero-beta-D-manno-heptose 7-phosphate: step 1/4. The protein operates within nucleotide-sugar biosynthesis; ADP-L-glycero-beta-D-manno-heptose biosynthesis; ADP-L-glycero-beta-D-manno-heptose from D-glycero-beta-D-manno-heptose 7-phosphate: step 3/4. In terms of biological role, catalyzes the phosphorylation of D-glycero-D-manno-heptose 7-phosphate at the C-1 position to selectively form D-glycero-beta-D-manno-heptose-1,7-bisphosphate. Catalyzes the ADP transfer from ATP to D-glycero-beta-D-manno-heptose 1-phosphate, yielding ADP-D-glycero-beta-D-manno-heptose. The polypeptide is Bifunctional protein HldE (Shigella flexneri serotype 5b (strain 8401)).